The following is a 416-amino-acid chain: Gamma-glutamyl phosphate reductase (416 aa).

The protein belongs to the gamma-glutamyl phosphate reductase family.

The protein localises to the cytoplasm. The catalysed reaction is L-glutamate 5-semialdehyde + phosphate + NADP(+) = L-glutamyl 5-phosphate + NADPH + H(+). Its pathway is amino-acid biosynthesis; L-proline biosynthesis; L-glutamate 5-semialdehyde from L-glutamate: step 2/2. Its function is as follows. Catalyzes the NADPH-dependent reduction of L-glutamate 5-phosphate into L-glutamate 5-semialdehyde and phosphate. The product spontaneously undergoes cyclization to form 1-pyrroline-5-carboxylate. This is Gamma-glutamyl phosphate reductase from Vibrio parahaemolyticus serotype O3:K6 (strain RIMD 2210633).